Consider the following 351-residue polypeptide: Fructose-1,6-bisphosphatase class 1 1 (351 aa).

Mg(2+) is bound by residues Glu-84, Asp-106, Leu-108, and Asp-109. Substrate contacts are provided by residues 109–112 (DGSS) and Asn-205. Residue Glu-277 participates in Mg(2+) binding.

This sequence belongs to the FBPase class 1 family. In terms of assembly, homotetramer. Mg(2+) is required as a cofactor.

It is found in the cytoplasm. It carries out the reaction beta-D-fructose 1,6-bisphosphate + H2O = beta-D-fructose 6-phosphate + phosphate. It functions in the pathway carbohydrate biosynthesis; Calvin cycle. The polypeptide is Fructose-1,6-bisphosphatase class 1 1 (Methylibium petroleiphilum (strain ATCC BAA-1232 / LMG 22953 / PM1)).